Consider the following 313-residue polypeptide: Probable cell division protein WhiA (313 aa).

Positions 276–309 (SLKELGEMLHPKLGKSGVNHRLRKLDEIAERIRK) form a DNA-binding region, H-T-H motif.

It belongs to the WhiA family.

Involved in cell division and chromosome segregation. The chain is Probable cell division protein WhiA from Ruminiclostridium cellulolyticum (strain ATCC 35319 / DSM 5812 / JCM 6584 / H10) (Clostridium cellulolyticum).